Reading from the N-terminus, the 142-residue chain is Hemoglobin cathodic subunit alpha (142 aa).

An N-acetylserine modification is found at S1. One can recognise a Globin domain in the interval 1–142; that stretch reads SLTAKDKALV…LSSTAADKYR (142 aa). Residue H59 coordinates O2. Residue H88 coordinates heme b.

It belongs to the globin family. As to quaternary structure, heterotetramer of two alpha chains and two beta chains.

Its function is as follows. Involved in oxygen transport from gills to the various peripheral tissues. The protein is Hemoglobin cathodic subunit alpha of Hoplosternum littorale (Hassar).